Reading from the N-terminus, the 140-residue chain is MAKKEVAKIKLQIPAGAANPSPPVGPALGQHGLNIMEFCKTFNAKTMEQKGMITPVVITVYSDRSFTFITKTPPASVLLLKAAKLEKGSGEPNRNKVGSVSMAQVEEIAKLKLPDLTAKDLDAATRSVLGTARSMGIEIK.

Belongs to the universal ribosomal protein uL11 family. As to quaternary structure, part of the ribosomal stalk of the 50S ribosomal subunit. Interacts with L10 and the large rRNA to form the base of the stalk. L10 forms an elongated spine to which L12 dimers bind in a sequential fashion forming a multimeric L10(L12)X complex. One or more lysine residues are methylated.

Functionally, forms part of the ribosomal stalk which helps the ribosome interact with GTP-bound translation factors. This Nitratidesulfovibrio vulgaris (strain DSM 19637 / Miyazaki F) (Desulfovibrio vulgaris) protein is Large ribosomal subunit protein uL11.